The chain runs to 274 residues: MTEFTTLLQQGNAWFFIPSAILLGALHGLEPGHSKTMMAAFIIAIKGTIKQAVMLGLAATISHTAVVWLIAFGGMVISKRFTAQSAEPWLQLISAVIIISTAFWMFWRTWRGERNWLENMHEHDHEHHHHDHEDHHDHGHHHHHEHGEYQDAHARAHANDIKRRFDGREVTNWQILLFGLTGGLIPCPAAITVLLICIQLKALTLGATLVVSFSLGLALTLVTVGVGAAISVQQVAKRWSGFNTLAKRAPYFSSLLIGLVGVYMGVHGFMGIMR.

Topologically, residues 1–12 are periplasmic; sequence MTEFTTLLQQGN. A helical membrane pass occupies residues 13–33; that stretch reads AWFFIPSAILLGALHGLEPGH. The Cytoplasmic segment spans residues 34 to 56; it reads SKTMMAAFIIAIKGTIKQAVMLG. A helical transmembrane segment spans residues 57-77; it reads LAATISHTAVVWLIAFGGMVI. The Periplasmic portion of the chain corresponds to 78 to 86; the sequence is SKRFTAQSA. Residues 87 to 107 traverse the membrane as a helical segment; the sequence is EPWLQLISAVIIISTAFWMFW. The Cytoplasmic portion of the chain corresponds to 108–174; it reads RTWRGERNWL…FDGREVTNWQ (67 aa). The span at 127–137 shows a compositional bias: basic and acidic residues; sequence HHHHDHEDHHD. Residues 127-153 are disordered; it reads HHHHDHEDHHDHGHHHHHEHGEYQDAH. The chain crosses the membrane as a helical span at residues 175–195; it reads ILLFGLTGGLIPCPAAITVLL. At 196–209 the chain is on the periplasmic side; that stretch reads ICIQLKALTLGATL. Residues 210–230 form a helical membrane-spanning segment; sequence VVSFSLGLALTLVTVGVGAAI. The Cytoplasmic segment spans residues 231-251; that stretch reads SVQQVAKRWSGFNTLAKRAPY. A helical membrane pass occupies residues 252-272; that stretch reads FSSLLIGLVGVYMGVHGFMGI. Residues 273–274 lie on the Periplasmic side of the membrane; that stretch reads MR.

It belongs to the NiCoT transporter (TC 2.A.52) family. RcnA subfamily.

Its subcellular location is the cell inner membrane. Efflux system for nickel and cobalt. This Escherichia coli O1:K1 / APEC protein is Nickel/cobalt efflux system RcnA (rcnA).